A 404-amino-acid chain; its full sequence is Caspase-1 (404 aa).

Residues 1-91 (MADKVLKEKR…HLAGVLELST (91 aa)) enclose the CARD domain. The propeptide occupies 1-119 (MADKVLKEKR…PFPAPQTVQD (119 aa)). The tract at residues 111–132 (FPAPQTVQDNPVKPASSEPRGS) is disordered. Active-site residues include histidine 237 and cysteine 285. Positions 298 to 316 (SVGPSGNSSLLAAEDFEYD) are excised as a propeptide. Serine 302 carries the post-translational modification Phosphoserine.

The protein belongs to the peptidase C14A family. Heterotetramer that consists of two anti-parallel arranged heterodimers, each one formed by a 20 kDa (Caspase-1 subunit p20) and a 10 kDa (Caspase-1 subunit p10) subunit. May be a component of the inflammasome, a protein complex which also includes PYCARD, CARD8 and NLRP2 and whose function would be the activation of pro-inflammatory caspases. Component of the AIM2 PANoptosome complex, a multiprotein complex that drives inflammatory cell death (PANoptosis). Both the p10 and p20 subunits interact with MEFV. Interacts with CARD17P/INCA and CARD18. Interacts with SERPINB1; this interaction regulates CASP1 activity. As to quaternary structure, heterotetramer that consists of two anti-parallel arranged heterodimers, each one formed by a 20 kDa (Caspase-1 subunit p20) and a 10 kDa (Caspase-1 subunit p10) subunit. In terms of processing, the two subunits are derived from the precursor sequence by an autocatalytic mechanism. Post-translationally, ubiquitinated via 'Lys-11'-linked polyubiquitination. Deubiquitinated by USP8.

It localises to the cytoplasm. Its subcellular location is the cell membrane. The enzyme catalyses Strict requirement for an Asp residue at position P1 and has a preferred cleavage sequence of Tyr-Val-Ala-Asp-|-.. Thiol protease involved in a variety of inflammatory processes by proteolytically cleaving other proteins, such as the precursors of the inflammatory cytokines interleukin-1 beta (IL1B) and interleukin 18 (IL18) as well as the pyroptosis inducer Gasdermin-D (GSDMD), into active mature peptides. Plays a key role in cell immunity as an inflammatory response initiator: once activated through formation of an inflammasome complex, it initiates a pro-inflammatory response through the cleavage of the two inflammatory cytokines IL1B and IL18, releasing the mature cytokines which are involved in a variety of inflammatory processes. Cleaves a tetrapeptide after an Asp residue at position P1. Also initiates pyroptosis, a programmed lytic cell death pathway, through cleavage of GSDMD. In contrast to cleavage of interleukin IL1B, recognition and cleavage of GSDMD is not strictly dependent on the consensus cleavage site but depends on an exosite interface on CASP1 that recognizes and binds the Gasdermin-D, C-terminal (GSDMD-CT) part. Cleaves and activates CASP7 in response to bacterial infection, promoting plasma membrane repair. Upon inflammasome activation, during DNA virus infection but not RNA virus challenge, controls antiviral immunity through the cleavage of CGAS, rendering it inactive. In apoptotic cells, cleaves SPHK2 which is released from cells and remains enzymatically active extracellularly. The chain is Caspase-1 (CASP1) from Sus scrofa (Pig).